Consider the following 474-residue polypeptide: Melanopsin (474 aa).

Topologically, residues 1 to 72 (MNSPSESRVP…VDVPDHAHYT (72 aa)) are extracellular. Residues Asn31 and Asn35 are each glycosylated (N-linked (GlcNAc...) asparagine). Residues 73-93 (LGTVILLVGLTGMLGNLTVIY) traverse the membrane as a helical segment. The Cytoplasmic portion of the chain corresponds to 94 to 107 (TFCRNRGLRTPANM). A helical membrane pass occupies residues 108–128 (LIINLAVSDFLMSFTQAPVFF). Residues 129–144 (ASSLYKKWLFGETGCK) lie on the Extracellular side of the membrane. Cys143 and Cys221 form a disulfide bridge. A helical transmembrane segment spans residues 145–165 (FYAFCGAVFGIVSMITLTAIA). Residues 166-188 (MDRYLVITRPLATIGMRSKRRTA) are Cytoplasmic-facing. A helical transmembrane segment spans residues 189–209 (LVLLGVWLYALAWSLPPFFGW). The Extracellular portion of the chain corresponds to 210 to 238 (SAYVPEGLLTSCSWDYVTFTPLVRAYTML). A helical membrane pass occupies residues 239 to 259 (LFCFVFFLPLLIIIFCYIFIF). At 260–293 (RAIRETGRACEGCGESPLRRRQWQRLQSEWKMAK) the chain is on the cytoplasmic side. Residues 294-314 (VALIVILLFVLSWAPYSTVAL) traverse the membrane as a helical segment. Topologically, residues 315 to 355 (VGFAGYSHILTPYMSSVPAVIAKASAIHNPIIYAITHPKYR) are extracellular. Lys337 carries the N6-(retinylidene)lysine modification. The helical transmembrane segment at 356 to 372 (AAIAQHLPCLGVLLGVS) threads the bilayer. Residues 373–474 (GQRSHPSLSY…RHLPSLDRRM (102 aa)) are Cytoplasmic-facing. The segment at 428–474 (AAQQASGQSFCSHDLEDGEVKAPSSPQEQKSKTPKTKRHLPSLDRRM) is disordered.

This sequence belongs to the G-protein coupled receptor 1 family. Opsin subfamily. As to expression, eye; expressed in a photosensitive subset of retinal ganglion cells (at protein level).

Its subcellular location is the cell membrane. The protein localises to the cell projection. It is found in the axon. It localises to the dendrite. The protein resides in the perikaryon. Photoreceptor that binds cis-retinaldehydes. Contributes to pupillar reflex, photoentrainment and other non-image forming responses to light. May be involved in the optokinetic visual tracking response. May be involved in the regulation of retinal hyaloid vessel growth and regression. In Rattus norvegicus (Rat), this protein is Melanopsin.